Reading from the N-terminus, the 440-residue chain is Putative purine permease YwdJ (440 aa).

Transmembrane regions (helical) follow at residues 3–23 (LVLGALQWTAFIIAAAIVVPV), 39–59 (LIQSTFFVLGIAAVIQCLKGH), 67–87 (PAGLWWGVYTIYAGLTGTVFA), 96–116 (LQGALLVSAVCFFLLSVFKVI), 130–150 (VYLLLLVMQLSQPIIKGILGI), 156–176 (GVDGLVFGLALVVIAAAFIMT), 188–208 (ILLALFGGWVLFAAAGAAKPI), 231–251 (GLIITSIFITILLIVNMLASM), 283–303 (LLSGLTGAIAPVPISGAAGFI), 314–334 (FMLGSILVIVISVIPFFMNTF), 341–361 (VGFAVNFVVFSAMGGLAFAEF), 374–394 (SIIGISLLTGVGIMFVPETAL), and 399–419 (PVFISLLSNGLVLGTLAAIAA).

Belongs to the nucleobase:cation symporter-2 (NCS2) (TC 2.A.40) family.

Its subcellular location is the cell membrane. The chain is Putative purine permease YwdJ (ywdJ) from Bacillus subtilis (strain 168).